The sequence spans 460 residues: Hydroxymethylglutaryl-CoA synthase erg13B (460 aa).

Glu86 (proton donor/acceptor) is an active-site residue. The active-site Acyl-thioester intermediate is the Cys120. (3S)-3-hydroxy-3-methylglutaryl-CoA-binding residues include Cys120, Thr162, Ser212, His263, Lys272, Asn340, and Ser374. His263 functions as the Proton donor/acceptor in the catalytic mechanism.

It belongs to the thiolase-like superfamily. HMG-CoA synthase family.

It carries out the reaction acetoacetyl-CoA + acetyl-CoA + H2O = (3S)-3-hydroxy-3-methylglutaryl-CoA + CoA + H(+). Its pathway is metabolic intermediate biosynthesis; (R)-mevalonate biosynthesis; (R)-mevalonate from acetyl-CoA: step 2/3. In terms of biological role, hydroxymethylglutaryl-CoA synthase; part of the first module of ergosterol biosynthesis pathway that includes the early steps of the pathway, conserved across all eukaryotes, and which results in the formation of mevalonate from acetyl-coenzyme A (acetyl-CoA). Erg13A and erg13B condense acetyl-CoA with acetoacetyl-CoA to form hydroxymethylglutaryl-CoA (HMG-CoA). The first module starts with the action of the cytosolic acetyl-CoA acetyltransferase erg10B that catalyzes the formation of acetoacetyl-CoA. The hydroxymethylglutaryl-CoA synthases erg13A and erg13B then condense acetyl-CoA with acetoacetyl-CoA to form HMG-CoA. The rate-limiting step of the early module is the reduction to mevalonate by the 3-hydroxy-3-methylglutaryl-coenzyme A (HMG-CoA) reductases hmg1 and hmg2. Mevalonate is also a precursor for the extracellular siderophore triacetylfusarinine C (TAFC). The polypeptide is Hydroxymethylglutaryl-CoA synthase erg13B (Aspergillus fumigatus (strain ATCC MYA-4609 / CBS 101355 / FGSC A1100 / Af293) (Neosartorya fumigata)).